We begin with the raw amino-acid sequence, 211 residues long: Urease accessory protein UreG (211 aa).

11-18 (GPVGAGKT) lines the GTP pocket.

This sequence belongs to the SIMIBI class G3E GTPase family. UreG subfamily. In terms of assembly, homodimer. UreD, UreF and UreG form a complex that acts as a GTP-hydrolysis-dependent molecular chaperone, activating the urease apoprotein by helping to assemble the nickel containing metallocenter of UreC. The UreE protein probably delivers the nickel.

It localises to the cytoplasm. Facilitates the functional incorporation of the urease nickel metallocenter. This process requires GTP hydrolysis, probably effectuated by UreG. This Actinobacillus pleuropneumoniae (Haemophilus pleuropneumoniae) protein is Urease accessory protein UreG.